Consider the following 235-residue polypeptide: Pyridoxine 5'-phosphate synthase (235 aa).

Asparagine 7 lines the 3-amino-2-oxopropyl phosphate pocket. Position 9-10 (9-10) interacts with 1-deoxy-D-xylulose 5-phosphate; it reads DH. Arginine 18 serves as a coordination point for 3-amino-2-oxopropyl phosphate. Catalysis depends on histidine 43, which acts as the Proton acceptor. The 1-deoxy-D-xylulose 5-phosphate site is built by arginine 45 and histidine 50. The Proton acceptor role is filled by glutamate 70. Position 100 (threonine 100) interacts with 1-deoxy-D-xylulose 5-phosphate. Histidine 187 serves as the catalytic Proton donor. 3-amino-2-oxopropyl phosphate-binding positions include glycine 188 and 209–210; that span reads GH.

It belongs to the PNP synthase family. Homooctamer; tetramer of dimers.

The protein resides in the cytoplasm. It carries out the reaction 3-amino-2-oxopropyl phosphate + 1-deoxy-D-xylulose 5-phosphate = pyridoxine 5'-phosphate + phosphate + 2 H2O + H(+). The protein operates within cofactor biosynthesis; pyridoxine 5'-phosphate biosynthesis; pyridoxine 5'-phosphate from D-erythrose 4-phosphate: step 5/5. Its function is as follows. Catalyzes the complicated ring closure reaction between the two acyclic compounds 1-deoxy-D-xylulose-5-phosphate (DXP) and 3-amino-2-oxopropyl phosphate (1-amino-acetone-3-phosphate or AAP) to form pyridoxine 5'-phosphate (PNP) and inorganic phosphate. The polypeptide is Pyridoxine 5'-phosphate synthase (Desulfatibacillum aliphaticivorans).